A 221-amino-acid polypeptide reads, in one-letter code: MTIRDNHGVKVSGLAIMGGTFDPIHNGHLRTAVEILDRFHYSALKLIPCFQPVHKGRPSVLPQQRFEMAELAISSDDRLCVDSREMDREGPSYSIDTLRDLRSEVGPDESLIMVLGMDSFLSLPTWYKWQEIMDYAHLLVVSRPGWEPDLISELSGFCENYRAASPHELQCAPSGRVWFETLTPLGISSSMIRELARKKESIAYLLPEPVQKYIEQHQLYR.

This sequence belongs to the NadD family.

It catalyses the reaction nicotinate beta-D-ribonucleotide + ATP + H(+) = deamido-NAD(+) + diphosphate. It functions in the pathway cofactor biosynthesis; NAD(+) biosynthesis; deamido-NAD(+) from nicotinate D-ribonucleotide: step 1/1. In terms of biological role, catalyzes the reversible adenylation of nicotinate mononucleotide (NaMN) to nicotinic acid adenine dinucleotide (NaAD). The sequence is that of Probable nicotinate-nucleotide adenylyltransferase from Marinomonas sp. (strain MWYL1).